A 213-amino-acid polypeptide reads, in one-letter code: FMN-dependent NADH:quinone oxidoreductase (213 aa).

Belongs to the azoreductase type 1 family. Homodimer. It depends on FMN as a cofactor.

It carries out the reaction 2 a quinone + NADH + H(+) = 2 a 1,4-benzosemiquinone + NAD(+). The enzyme catalyses N,N-dimethyl-1,4-phenylenediamine + anthranilate + 2 NAD(+) = 2-(4-dimethylaminophenyl)diazenylbenzoate + 2 NADH + 2 H(+). In terms of biological role, quinone reductase that provides resistance to thiol-specific stress caused by electrophilic quinones. Its function is as follows. Also exhibits azoreductase activity. Catalyzes the reductive cleavage of the azo bond in aromatic azo compounds to the corresponding amines. The protein is FMN-dependent NADH:quinone oxidoreductase of Streptococcus agalactiae serotype III (strain NEM316).